A 389-amino-acid chain; its full sequence is 8-amino-7-oxononanoate synthase (389 aa).

Residue arginine 23 coordinates substrate. Glycine 114–tyrosine 115 lines the pyridoxal 5'-phosphate pocket. Histidine 139 serves as a coordination point for substrate. 3 residues coordinate pyridoxal 5'-phosphate: serine 185, histidine 213, and threonine 242. The residue at position 245 (lysine 245) is an N6-(pyridoxal phosphate)lysine. Threonine 357 is a binding site for substrate.

This sequence belongs to the class-II pyridoxal-phosphate-dependent aminotransferase family. BioF subfamily. In terms of assembly, homodimer. Pyridoxal 5'-phosphate is required as a cofactor.

It carries out the reaction 6-carboxyhexanoyl-[ACP] + L-alanine + H(+) = (8S)-8-amino-7-oxononanoate + holo-[ACP] + CO2. It participates in cofactor biosynthesis; biotin biosynthesis. Its function is as follows. Catalyzes the decarboxylative condensation of pimeloyl-[acyl-carrier protein] and L-alanine to produce 8-amino-7-oxononanoate (AON), [acyl-carrier protein], and carbon dioxide. This is 8-amino-7-oxononanoate synthase from Acidithiobacillus ferrooxidans (strain ATCC 23270 / DSM 14882 / CIP 104768 / NCIMB 8455) (Ferrobacillus ferrooxidans (strain ATCC 23270)).